Here is a 226-residue protein sequence, read N- to C-terminus: V-type proton ATPase subunit E 1 (226 aa).

Ala2 bears the N-acetylalanine mark. Position 56 is a phosphotyrosine (Tyr56).

This sequence belongs to the V-ATPase E subunit family. V-ATPase is a heteromultimeric enzyme made up of two complexes: the ATP-hydrolytic V1 complex and the proton translocation V0 complex. The V1 complex consists of three catalytic AB heterodimers that form a heterohexamer, three peripheral stalks each consisting of EG heterodimers, one central rotor including subunits D and F, and the regulatory subunits C and H. The proton translocation complex V0 consists of the proton transport subunit a, a ring of proteolipid subunits c9c'', rotary subunit d, subunits e and f, and the accessory subunits ATP6AP1/Ac45 and ATP6AP2/PRR. Interacts with RABL2/RABL2A; binds preferentially to GTP-bound RABL2. Interacts with ALDOC. Interacts with RAB11B. Kidney; localizes to early distal nephron, encompassing thick ascending limbs and distal convoluted tubules (at protein level). Ubiquitous. High expression in the skin.

The protein resides in the apical cell membrane. The protein localises to the cytoplasmic vesicle. It is found in the secretory vesicle. It localises to the synaptic vesicle membrane. Its subcellular location is the clathrin-coated vesicle membrane. Subunit of the V1 complex of vacuolar(H+)-ATPase (V-ATPase), a multisubunit enzyme composed of a peripheral complex (V1) that hydrolyzes ATP and a membrane integral complex (V0) that translocates protons. V-ATPase is responsible for acidifying and maintaining the pH of intracellular compartments and in some cell types, is targeted to the plasma membrane, where it is responsible for acidifying the extracellular environment. This is V-type proton ATPase subunit E 1 (ATP6V1E1) from Homo sapiens (Human).